Here is a 480-residue protein sequence, read N- to C-terminus: Membrane-bound lytic murein transglycosylase F (480 aa).

A signal peptide spans 1-15 (MNRILLTLLTLTLLA). Residues 16–259 (GCQRVAVEET…HLDEKYFAHV (244 aa)) are non-LT domain. The LT domain stretch occupies residues 260–480 (KRFDYVDTRA…EKAITGAQPE (221 aa)). Glu-304 is an active-site residue.

In the N-terminal section; belongs to the bacterial solute-binding protein 3 family. This sequence in the C-terminal section; belongs to the transglycosylase Slt family.

The protein localises to the cell outer membrane. The catalysed reaction is Exolytic cleavage of the (1-&gt;4)-beta-glycosidic linkage between N-acetylmuramic acid (MurNAc) and N-acetylglucosamine (GlcNAc) residues in peptidoglycan, from either the reducing or the non-reducing ends of the peptidoglycan chains, with concomitant formation of a 1,6-anhydrobond in the MurNAc residue.. In terms of biological role, murein-degrading enzyme that degrades murein glycan strands and insoluble, high-molecular weight murein sacculi, with the concomitant formation of a 1,6-anhydromuramoyl product. Lytic transglycosylases (LTs) play an integral role in the metabolism of the peptidoglycan (PG) sacculus. Their lytic action creates space within the PG sacculus to allow for its expansion as well as for the insertion of various structures such as secretion systems and flagella. In Shewanella woodyi (strain ATCC 51908 / MS32), this protein is Membrane-bound lytic murein transglycosylase F.